Here is a 295-residue protein sequence, read N- to C-terminus: Small ribosomal subunit protein uS2 (295 aa).

Positions 260–295 are disordered; it reads KQAKKFSKTKNIDEETNTEFEQALNDADENKNSDNA.

It belongs to the universal ribosomal protein uS2 family.

This is Small ribosomal subunit protein uS2 from Rickettsia felis (strain ATCC VR-1525 / URRWXCal2) (Rickettsia azadi).